Here is a 1006-residue protein sequence, read N- to C-terminus: uncharacterized protein (1006 aa).

The interval 326–371 is disordered; that stretch reads EMEKKRPRSPELVPKKIVMEKERPSSPDSEAEEREHNLRIEKERHQ. Composition is skewed to basic and acidic residues over residues 338 to 350 and 358 to 371; these read VPKKIVMEKERPS and EREHNLRIEKERHQ. Coiled-coil stretches lie at residues 358–473 and 756–782; these read EREH…ARLA and EVQKQRAVDSLNSQYEKERNELDAFGR.

This is an uncharacterized protein from Caenorhabditis elegans.